The following is a 115-amino-acid chain: uncharacterized protein (115 aa).

A signal peptide spans 1–20 (MKTFFRTVLFGSLMAVCANS).

This is an uncharacterized protein from Escherichia coli O6:H1 (strain CFT073 / ATCC 700928 / UPEC).